A 77-amino-acid polypeptide reads, in one-letter code: U8-lycotoxin-Ls1i (77 aa).

The signal sequence occupies residues 1–20 (MKLIIFTGLVLFAIVSLIEV). The propeptide occupies 21-26 (QADNER).

The protein belongs to the neurotoxin 19 (CSTX) family. 08 (U8-Lctx) subfamily. Contains 4 disulfide bonds. As to expression, expressed by the venom gland.

The protein localises to the secreted. The protein is U8-lycotoxin-Ls1i of Lycosa singoriensis (Wolf spider).